The following is a 310-amino-acid chain: Phosphoribosylaminoimidazole-succinocarboxamide synthase (310 aa).

This sequence belongs to the SAICAR synthetase family.

It carries out the reaction 5-amino-1-(5-phospho-D-ribosyl)imidazole-4-carboxylate + L-aspartate + ATP = (2S)-2-[5-amino-1-(5-phospho-beta-D-ribosyl)imidazole-4-carboxamido]succinate + ADP + phosphate + 2 H(+). It participates in purine metabolism; IMP biosynthesis via de novo pathway; 5-amino-1-(5-phospho-D-ribosyl)imidazole-4-carboxamide from 5-amino-1-(5-phospho-D-ribosyl)imidazole-4-carboxylate: step 1/2. This chain is Phosphoribosylaminoimidazole-succinocarboxamide synthase, found in Stenotrophomonas maltophilia (strain K279a).